A 987-amino-acid chain; its full sequence is UPF0182 protein Lxx09300 (987 aa).

7 consecutive transmembrane segments (helical) span residues 17–37 (VWTT…FAGL), 59–79 (AAIA…WVVI), 108–128 (RLAM…SAAS), 167–187 (VGFA…TCYL), 206–226 (VQIS…VWLD), 256–276 (AVLA…AFTG), and 283–303 (VGTA…PWAI). Disordered stretches follow at residues 700 to 719 (RDDA…DPTL) and 886 to 947 (TAGD…ALQQ). Low complexity predominate over residues 705–719 (TTPNDPTSSPTDPTL). Positions 897 to 932 (GGSGGGSSGDAGSSAGGGSSGGGGSSAGGSSSGSGS) are enriched in gly residues. Residues 933–947 (SGTQSNAALQRALQQ) show a composition bias toward low complexity.

It belongs to the UPF0182 family.

The protein resides in the cell membrane. This chain is UPF0182 protein Lxx09300, found in Leifsonia xyli subsp. xyli (strain CTCB07).